A 176-amino-acid polypeptide reads, in one-letter code: Sec-independent protein translocase protein TatB (176 aa).

The helical transmembrane segment at 1 to 21 (MLDLGLSKMALIGVVALVVLG) threads the bilayer. Positions 155–176 (QSGAARVARHQPASLRRPTRFL) are disordered.

It belongs to the TatB family. As to quaternary structure, the Tat system comprises two distinct complexes: a TatABC complex, containing multiple copies of TatA, TatB and TatC subunits, and a separate TatA complex, containing only TatA subunits. Substrates initially bind to the TatABC complex, which probably triggers association of the separate TatA complex to form the active translocon.

The protein resides in the cell inner membrane. Part of the twin-arginine translocation (Tat) system that transports large folded proteins containing a characteristic twin-arginine motif in their signal peptide across membranes. Together with TatC, TatB is part of a receptor directly interacting with Tat signal peptides. TatB may form an oligomeric binding site that transiently accommodates folded Tat precursor proteins before their translocation. The protein is Sec-independent protein translocase protein TatB of Burkholderia ambifaria (strain ATCC BAA-244 / DSM 16087 / CCUG 44356 / LMG 19182 / AMMD) (Burkholderia cepacia (strain AMMD)).